We begin with the raw amino-acid sequence, 402 residues long: Protein FAM221B (402 aa).

Positions 1-35 (MEAHEIIEEPHITMDAEKHPPSKDPSAEDLQENHI) are enriched in basic and acidic residues. Disordered regions lie at residues 1–205 (MEAH…TARP) and 378–402 (DTQK…HRPL). Polar residues-rich tracts occupy residues 77–90 (EPSI…TPTY) and 393–402 (DTVSNWHRPL).

The protein belongs to the FAM221 family.

The polypeptide is Protein FAM221B (FAM221B) (Homo sapiens (Human)).